The following is a 661-amino-acid chain: UvrABC system protein C (661 aa).

In terms of domain architecture, GIY-YIG spans 25–104 (AEPGCYLMRD…IKNHQPHFNV (80 aa)). Positions 214–249 (DELQHLLQEQMERYAERMDYESAARVRDQLQGLDQL) constitute a UVR domain. Over residues 636-652 (FFHPSDEGTDADARAAL) the composition is skewed to basic and acidic residues. A disordered region spans residues 636–661 (FFHPSDEGTDADARAALEEQPQELSA).

The protein belongs to the UvrC family. As to quaternary structure, interacts with UvrB in an incision complex.

It localises to the cytoplasm. The UvrABC repair system catalyzes the recognition and processing of DNA lesions. UvrC both incises the 5' and 3' sides of the lesion. The N-terminal half is responsible for the 3' incision and the C-terminal half is responsible for the 5' incision. The sequence is that of UvrABC system protein C from Synechococcus sp. (strain CC9605).